Reading from the N-terminus, the 101-residue chain is Small ribosomal subunit protein uS14 (101 aa).

The protein belongs to the universal ribosomal protein uS14 family. Part of the 30S ribosomal subunit. Contacts proteins S3 and S10.

Its function is as follows. Binds 16S rRNA, required for the assembly of 30S particles and may also be responsible for determining the conformation of the 16S rRNA at the A site. This is Small ribosomal subunit protein uS14 from Stenotrophomonas maltophilia (strain K279a).